The primary structure comprises 258 residues: Development-specific 25 kDa protein (258 aa).

Residue 10–34 (VYVGGFSGFGYQVCQMMMKKPMKHL) coordinates NAD(+). Serine 138 is a substrate binding site. Tyrosine 151 functions as the Proton acceptor in the catalytic mechanism.

This sequence belongs to the short-chain dehydrogenases/reductases (SDR) family.

This Sarcophaga peregrina (Flesh fly) protein is Development-specific 25 kDa protein.